The chain runs to 278 residues: Gap junction delta-3 protein (278 aa).

Topologically, residues 1–24 (MGEWAFLGSLLDAVQLQSPLVGRL) are cytoplasmic. A helical transmembrane segment spans residues 25–45 (WLVIMLIFRILVLATVGGAVF). Over 46–76 (EDEQEEFVCNTLQPGCRQTCYDRAFPVSHYR) the chain is Extracellular. A helical transmembrane segment spans residues 77–97 (FWLFHILLLSAPPVLFVIYSM). Residues 98–136 (HQASKEAGGAQLAPPCARGRAEAPCSPCALRARRARRCY) are Cytoplasmic-facing. Residues 137–157 (LLSVALRLLAELAFLGGQALL) traverse the membrane as a helical segment. The Extracellular portion of the chain corresponds to 158 to 188 (YGFRVDPHYACAGPPCPHTVDCFVSRPTEKT). Residues 189-209 (VFVVFYFAVGLLSALLSVAEL) traverse the membrane as a helical segment. Topologically, residues 210 to 278 (GHLLWKGRQR…LATVRQDLAI (69 aa)) are cytoplasmic. The tract at residues 223–278 (LPPPPPSPSLPSQRGDPDPFGPPAYAHRSPAGDSEGEGGSGHSKASLATVRQDLAI) is disordered.

It belongs to the connexin family. Delta-type subfamily. In terms of assembly, a connexon is composed of a hexamer of connexins.

The protein localises to the cell membrane. The protein resides in the cell junction. It localises to the gap junction. In terms of biological role, one gap junction consists of a cluster of closely packed pairs of transmembrane channels, the connexons, through which materials of low MW diffuse from one cell to a neighboring cell. The polypeptide is Gap junction delta-3 protein (Gjd3) (Mus musculus (Mouse)).